Reading from the N-terminus, the 236-residue chain is MAATLLDVCAVVPAAGFGRRMQTECPKQYLSIGNKTILEHSVHALLAHPRVTRVVIAISPGDHRFAQLPLANHPQITVVDGGNERADSVLAGLQAVAEAQWVLVHDAARPCLHQDDLARLLAISENSRVGGILASPVRDTMKRGESGKNAIAHTVERADLWHALTPQFFPRELLHDCLTRALNEGATITDEASALEYCGFHPALVEGRADNIKVTRPEDLALAEFYLTRTIHQEKA.

It belongs to the IspD/TarI cytidylyltransferase family. IspD subfamily. Homodimer.

The catalysed reaction is 2-C-methyl-D-erythritol 4-phosphate + CTP + H(+) = 4-CDP-2-C-methyl-D-erythritol + diphosphate. It functions in the pathway isoprenoid biosynthesis; isopentenyl diphosphate biosynthesis via DXP pathway; isopentenyl diphosphate from 1-deoxy-D-xylulose 5-phosphate: step 2/6. Catalyzes the formation of 4-diphosphocytidyl-2-C-methyl-D-erythritol from CTP and 2-C-methyl-D-erythritol 4-phosphate (MEP). In Salmonella paratyphi B (strain ATCC BAA-1250 / SPB7), this protein is 2-C-methyl-D-erythritol 4-phosphate cytidylyltransferase.